Here is an 806-residue protein sequence, read N- to C-terminus: Sucrose synthase (806 aa).

The segment at 275-752 (MVFNVVILSP…GLQRIEEKYT (478 aa)) is GT-B glycosyltransferase.

It belongs to the glycosyltransferase 1 family. Plant sucrose synthase subfamily.

It carries out the reaction an NDP-alpha-D-glucose + D-fructose = a ribonucleoside 5'-diphosphate + sucrose + H(+). Its function is as follows. Sucrose-cleaving enzyme that provides UDP-glucose and fructose for various metabolic pathways. This chain is Sucrose synthase (SUCS), found in Vicia faba (Broad bean).